The primary structure comprises 72 residues: UPF0270 protein KPN78578_37030 (72 aa).

The protein belongs to the UPF0270 family.

The chain is UPF0270 protein KPN78578_37030 from Klebsiella pneumoniae subsp. pneumoniae (strain ATCC 700721 / MGH 78578).